The following is a 961-amino-acid chain: MTPRRTPLSQLEQGIPFEQRHIGPDAEAQAKMLAQVGYGSLDELTAAAVPDVIKSAEALNLPSARTEAEVLAELRSLADRNQVLAPMIGLGYYGTFTPPVILRNVMENPAWYTAYTPYQPEISQGRLEALLNFQTMVAELTGLPTSGASLLDEGTAAAEAMALSRRVGKVKKGVFLVDADTLPQTVAVIETRAEPTGVEVVVADLSDGIPAEIAERGVFGVLLQYPGASGAVRAIEPVIEQAHELGAIVTVAADLLALTLLTSPGALGADIAVGTTQRFGVPMGFGGPHAGFMAVREKFARSLPGRLVGVSVDADGNKAYRLALQTREQHIRREKATSNICTAQVLLAVMAGMYAVYHGPDGLRTIARRTHRFAAILADGLRSAGVDVVHGAFFDTLTVRVPGKAAGIVAEARERGVNLRLVDADHVSIACDETTTRSQISAVWAAFGAEGDIEALDAAVADALPEGLLRSDDILTHPVFHQHRSETAMLRYLRKLADRDYALDRGMIPLGSCTMKLNATAEMESITWPEFGALHPFAPADQAQGFLTLIRELEERLAEVTGYDAVSIQPNAGSQGEFAGLLAVRAYHRANGDDQRTVCLIPSSAHGTNAASAVMAGMKVVVVKTADDGEVDIADLRAKIEQHRDELAVLMITYPSTHGVFEEHVAEICGEVHDAGGQVYVDGANLNALVGLAKPGKFGGDVSHLNLHKTFCIPHGGGGPGVGPVGVRAHLAPYLPNHPLQPAAGPETGVGPISAAPWGSAGILPISWAYVRLMGGEGLKRATQVAVLAANYIAKRLEPHFPILYNGPAGLVAHECIVDLRPISKATGVSIDDVAKRLIDYGFHSPTMSFPVAGTLMIEPTESEDLAELDRFCDTMIAIRAEIEKVASGEWSADDNPLSNAPHTAAALGGDWEHGYSREEAVFPAGVSAADKYWPPVRRIDGAFGDRNLVCSCPPLDAYDD.

Lysine 709 is modified (N6-(pyridoxal phosphate)lysine).

It belongs to the GcvP family. As to quaternary structure, the glycine cleavage system is composed of four proteins: P, T, L and H. Pyridoxal 5'-phosphate is required as a cofactor.

The enzyme catalyses N(6)-[(R)-lipoyl]-L-lysyl-[glycine-cleavage complex H protein] + glycine + H(+) = N(6)-[(R)-S(8)-aminomethyldihydrolipoyl]-L-lysyl-[glycine-cleavage complex H protein] + CO2. Its function is as follows. The glycine cleavage system catalyzes the degradation of glycine. The P protein binds the alpha-amino group of glycine through its pyridoxal phosphate cofactor; CO(2) is released and the remaining methylamine moiety is then transferred to the lipoamide cofactor of the H protein. The sequence is that of Glycine dehydrogenase (decarboxylating) from Streptomyces griseus subsp. griseus (strain JCM 4626 / CBS 651.72 / NBRC 13350 / KCC S-0626 / ISP 5235).